A 107-amino-acid chain; its full sequence is Integration host factor subunit alpha (107 aa).

This sequence belongs to the bacterial histone-like protein family. As to quaternary structure, heterodimer of an alpha and a beta chain.

This protein is one of the two subunits of integration host factor, a specific DNA-binding protein that functions in genetic recombination as well as in transcriptional and translational control. This Bartonella tribocorum (strain CIP 105476 / IBS 506) protein is Integration host factor subunit alpha.